An 88-amino-acid chain; its full sequence is Small ribosomal subunit protein uS17 (88 aa).

It belongs to the universal ribosomal protein uS17 family. Part of the 30S ribosomal subunit.

One of the primary rRNA binding proteins, it binds specifically to the 5'-end of 16S ribosomal RNA. The sequence is that of Small ribosomal subunit protein uS17 from Prochlorococcus marinus (strain MIT 9301).